A 128-amino-acid polypeptide reads, in one-letter code: Small ribosomal subunit protein uS9 (128 aa).

The span at Arg-97–Lys-113 shows a compositional bias: basic and acidic residues. The tract at residues Arg-97–Arg-128 is disordered. Residues Pro-114–Arg-128 show a composition bias toward basic residues.

Belongs to the universal ribosomal protein uS9 family.

This is Small ribosomal subunit protein uS9 from Bacteroides fragilis (strain ATCC 25285 / DSM 2151 / CCUG 4856 / JCM 11019 / LMG 10263 / NCTC 9343 / Onslow / VPI 2553 / EN-2).